We begin with the raw amino-acid sequence, 393 residues long: Sialyltransferase-like protein 1 (393 aa).

Residues 1–8 lie on the Cytoplasmic side of the membrane; that stretch reads MKRPLRRP. The helical; Signal-anchor for type II membrane protein transmembrane segment at 9 to 27 threads the bilayer; sequence FAVLLFVVLCAAASFPSVL. The Lumenal portion of the chain corresponds to 28–393; the sequence is RRSVGPAPVL…IAVPPVVFYH (366 aa). N-linked (GlcNAc...) asparagine glycosylation is found at asparagine 49, asparagine 212, and asparagine 258.

This sequence belongs to the glycosyltransferase 29 family.

It localises to the golgi apparatus membrane. Possesses sialyltransferase-like activity in vitro. Transfers sialic acid to the oligosaccharide Gal-beta-1,3-GalNAc and to glycoproteins such as asialofetuin, alpha-1-acid glycoprotein (NeuAc-alpha-2,3-Gal-beta-1,3-GalNAc-) and andasialo-alpha-1-acid glycoprotein. The transferred sialic acid is linked to galactose of Gal-beta-1,3-GalNAc through alpha-2,6-linkage. In Oryza sativa subsp. indica (Rice), this protein is Sialyltransferase-like protein 1.